The chain runs to 176 residues: MCSFSTSVLCGPFQAVTYSAHAGAVCQTLGIVFSRSEHSTPSVCADAFSMKVRGIPVLQRRTWALVLLVLSSTSACVRKNSLEDVRFPSSSPIGEARRFAVITKAYVLLRDKPGVTGIVIAYARRKDIFPVLGIDLLSKDKESALWVNVERGWLPWDCVQLYSSKAKALAASKKLS.

This is an uncharacterized protein from Treponema pallidum (strain Nichols).